A 263-amino-acid polypeptide reads, in one-letter code: Inactive adenylate kinase (263 aa).

This sequence belongs to the adenylate kinase family.

It is found in the cytoplasm. Functionally, lacks adenylate kinase activity. This chain is Inactive adenylate kinase, found in Plasmodium falciparum (isolate 3D7).